Consider the following 138-residue polypeptide: MNIIDHFEQENIAKLTANKQIPDFKAGDTVKVTVKVLDRSIEKDGKEKLTERFQAYEGLVIAKRNRGITSSFLVRKISHGEGVERRFMTYSPIVHSINVVKYGVVRRAKLYYLRNRSGKSARIKERHIHIAKTKTVKA.

The protein belongs to the bacterial ribosomal protein bL19 family.

This protein is located at the 30S-50S ribosomal subunit interface and may play a role in the structure and function of the aminoacyl-tRNA binding site. The sequence is that of Large ribosomal subunit protein bL19 from Rickettsia akari (strain Hartford).